The chain runs to 1186 residues: Atrophin-1 (1186 aa).

3 disordered regions span residues 1 to 604 (MKTR…PTVT), 618 to 763 (ASSP…ARFN), and 781 to 858 (VPLE…HRPP). The Nuclear localization signal motif lies at 16-32 (RKKEAPGPREELRSRGR). A compositionally biased stretch (basic and acidic residues) spans 17-29 (KKEAPGPREELRS). S34 is modified (phosphoserine). Residues 45–63 (GKAEKSRQTAKKARVEEAS) show a composition bias toward basic and acidic residues. A phosphoserine mark is found at S77, S79, S100, S102, and S106. Basic and acidic residues predominate over residues 107 to 127 (LDGRSLNDDGSSDPRDIDQDN). Residues 128 to 151 (RSTSPSIYSPGSVENDSDSSSGLS) are compositionally biased toward polar residues. Positions 157–173 (PYHPPPLFPPSPQPPDS) are enriched in pro residues. Low complexity-rich tracts occupy residues 258 to 270 (PISVSSSGASGAP), 349 to 365 (PTLAPSPHSLPPASSSA), and 375 to 396 (SSSSSSSAAASSSSSSSSSSAS). The segment covering 416–437 (SLSVSNQPPKYTQPSLPSQAVW) has biased composition (polar residues). The span at 484-503 (QQQQQQQQQQQQQQQHHGNS) shows a compositional bias: low complexity. The tract at residues 513 to 563 (HPLEGGSSHHAHPYAMSPSLGSLRPYPPGPAHLPPPHSQVSYSQAGPNGPP) is involved in binding BAIAP2. Residues 537 to 549 (PYPPGPAHLPPPH) show a composition bias toward pro residues. 2 stretches are compositionally biased toward low complexity: residues 565-582 (SSSSNSSSSTSQGSYPCS) and 618-628 (ASSPAGYKTAS). The residue at position 628 (S628) is a Phosphoserine. An N6-acetyllysine modification is found at K637. Position 649 is a phosphothreonine (T649). S657 is modified (phosphoserine). T665 is modified (phosphothreonine). 2 stretches are compositionally biased toward pro residues: residues 689-714 (GPGPLPPAGPSGLPSLPPPPAAPASG) and 735-748 (SPVPPARSPSPPPK). S735 carries the phosphoserine; by MAPK8 modification. S742 and S744 each carry phosphoserine. Basic and acidic residues predominate over residues 791-835 (KRADLVEKVRREAEQRAREEKEREREREREKEREREKERELERSV). Residues 875 to 890 (DTPALRTLSEYARPHV) are required for interaction with FAT1. At S892 the chain carries Phosphoserine. Positions 1029–1037 (ALGNDPLAR) match the Nuclear export signal motif. An Asymmetric dimethylarginine modification is found at R1111. Residue K1179 forms a Glycyl lysine isopeptide (Lys-Gly) (interchain with G-Cter in SUMO2) linkage.

Interacts with NR2E1; the interaction represses the transcriptional activity of NR2E1. Interacts with BAIAP2, WWP1, WWP2, WWP3 and RERE. Interacts (via its N-terminus) with MTG8; the interaction enhances transcriptional repression of MTG8. Interacts with FAT1 (via a C-terminal domain). Interacts with PQBP1. In terms of processing, phosphorylated in vitro by MAPK8/JNK1 on Ser-735.

The protein localises to the nucleus. The protein resides in the cytoplasm. It localises to the perinuclear region. It is found in the cell junction. Functionally, transcriptional corepressor. Corepressor of MTG8 transcriptional repression. Recruits NR2E1 to repress transcription. Has some intrinsic repression activity. Promotes vascular smooth cell (VSMC) migration and orientation. In Pan troglodytes (Chimpanzee), this protein is Atrophin-1 (ATN1).